Here is a 419-residue protein sequence, read N- to C-terminus: Methionine aminopeptidase 2 (419 aa).

Residues 1-69 form a disordered region; it reads MSTNSSNPNE…KITAIDNSYP (69 aa). Residues 11 to 29 show a composition bias toward basic and acidic residues; it reads VMEKVQDLKIDDSKPKVDS. Over residues 30 to 41 the composition is skewed to acidic residues; sequence EEQPEAESDGES. Over residues 48 to 61 the composition is skewed to basic residues; it reads KKKKKKKSKKKKKI. Substrate is bound at residue His-172. The a divalent metal cation site is built by Asp-192, Asp-203, and His-272. His-280 lines the substrate pocket. Residues Glu-305 and Glu-400 each coordinate a divalent metal cation.

The protein belongs to the peptidase M24A family. Methionine aminopeptidase eukaryotic type 2 subfamily. The cofactor is Co(2+). It depends on Zn(2+) as a cofactor. Requires Mn(2+) as cofactor. Fe(2+) is required as a cofactor.

The protein localises to the cytoplasm. The enzyme catalyses Release of N-terminal amino acids, preferentially methionine, from peptides and arylamides.. Its function is as follows. Cotranslationally removes the N-terminal methionine from nascent proteins. The N-terminal methionine is often cleaved when the second residue in the primary sequence is small and uncharged (Met-Ala-, Cys, Gly, Pro, Ser, Thr, or Val). This is Methionine aminopeptidase 2 from Debaryomyces hansenii (strain ATCC 36239 / CBS 767 / BCRC 21394 / JCM 1990 / NBRC 0083 / IGC 2968) (Yeast).